Reading from the N-terminus, the 228-residue chain is Probable septum site-determining protein MinC (228 aa).

This sequence belongs to the MinC family. As to quaternary structure, interacts with MinD and FtsZ.

Its function is as follows. Cell division inhibitor that blocks the formation of polar Z ring septums. Rapidly oscillates between the poles of the cell to destabilize FtsZ filaments that have formed before they mature into polar Z rings. Prevents FtsZ polymerization. In Pectobacterium carotovorum subsp. carotovorum (strain PC1), this protein is Probable septum site-determining protein MinC.